Reading from the N-terminus, the 115-residue chain is Macroconotoxin Mu8.1 (115 aa).

A signal peptide spans Met-1–Gly-21. The propeptide occupies Ser-22–Arg-26. Disulfide bonds link Cys-36–Cys-77, Cys-44–Cys-60, Cys-48–Cys-56, Cys-83–Cys-115, and Cys-87–Cys-97. Residue Glu-40 coordinates Zn(2+). Residue His-68 coordinates Zn(2+).

Mostly found as a homodimer in solution; non-covalently bound. Expressed by the venom duct.

It is found in the secreted. Modestly and reversibly inhibits Cav2.3/CACNA1E (IC(50)=5.8 uM) recombinantly expressed in HEK293 cells without affecting the voltage dependence of activation. In mouse DRG sensory neurons, modulates depolarization-induced calcium influx. In Conus mucronatus (Pointed cone), this protein is Macroconotoxin Mu8.1.